We begin with the raw amino-acid sequence, 308 residues long: Probable GTP 3',8-cyclase (308 aa).

Residues 4–224 (RFGRPLEDLR…QIRKKHFRPR (221 aa)) enclose the Radical SAM core domain. R13 is a binding site for GTP. 3 residues coordinate [4Fe-4S] cluster: C20, C24, and C27. GTP is bound at residue K60. G64 is an S-adenosyl-L-methionine binding site. Position 90 (T90) interacts with GTP. S114 contributes to the S-adenosyl-L-methionine binding site. K151 provides a ligand contact to GTP. Residues C245 and C248 each coordinate [4Fe-4S] cluster. 250 to 252 (RIR) contributes to the GTP binding site. [4Fe-4S] cluster is bound at residue C262.

The protein belongs to the radical SAM superfamily. MoaA family. The cofactor is [4Fe-4S] cluster.

The enzyme catalyses GTP + AH2 + S-adenosyl-L-methionine = (8S)-3',8-cyclo-7,8-dihydroguanosine 5'-triphosphate + 5'-deoxyadenosine + L-methionine + A + H(+). It functions in the pathway cofactor biosynthesis; molybdopterin biosynthesis. In terms of biological role, catalyzes the cyclization of GTP to (8S)-3',8-cyclo-7,8-dihydroguanosine 5'-triphosphate. The polypeptide is Probable GTP 3',8-cyclase (Saccharolobus islandicus (strain M.16.27) (Sulfolobus islandicus)).